A 186-amino-acid polypeptide reads, in one-letter code: Dynactin subunit 3 (186 aa).

Position 2 is an N-acetylalanine (alanine 2). Residues 46–66 (NIASKRERVKILYKKIEDLIK) are a coiled coil.

It belongs to the dynactin subunit 3 family. Subunit of dynactin, a multiprotein complex part of a tripartite complex with dynein and a adapter, such as BICDL1, BICD2 or HOOK3. The dynactin complex is built around ACTR1A/ACTB filament and consists of an actin-related filament composed of a shoulder domain, a pointed end and a barbed end. Its length is defined by its flexible shoulder domain. The soulder is composed of 2 DCTN1 subunits, 4 DCTN2 and 2 DCTN3. The 4 DCNT2 (via N-terminus) bind the ACTR1A filament and act as molecular rulers to determine the length. The pointed end is important for binding dynein-dynactin cargo adapters. Consists of 4 subunits: ACTR10, DCNT4, DCTN5 and DCTN6. The barbed end is composed of a CAPZA1:CAPZB heterodimers, which binds ACTR1A/ACTB filament and dynactin and stabilizes dynactin.

Its subcellular location is the cytoplasm. The protein localises to the cytoskeleton. It is found in the microtubule organizing center. The protein resides in the centrosome. It localises to the chromosome. Its subcellular location is the centromere. The protein localises to the kinetochore. It is found in the spindle. The protein resides in the cleavage furrow. It localises to the midbody. In terms of biological role, part of the dynactin complex that activates the molecular motor dynein for ultra-processive transport along microtubules. Together with dynein may be involved in spindle assembly and cytokinesis. The chain is Dynactin subunit 3 from Mus musculus (Mouse).